The primary structure comprises 44 residues: Large ribosomal subunit protein bL34 (44 aa).

Belongs to the bacterial ribosomal protein bL34 family.

The polypeptide is Large ribosomal subunit protein bL34 (Ehrlichia ruminantium (strain Gardel)).